The chain runs to 556 residues: Polypeptide N-acetylgalactosaminyltransferase 13 (556 aa).

Residues 1 to 4 lie on the Cytoplasmic side of the membrane; the sequence is MRRL. Residues 5-27 form a helical; Signal-anchor for type II membrane protein membrane-spanning segment; that stretch reads VYCKVVLATSLMWVLVDVFLLLY. The Lumenal segment spans residues 28 to 556; sequence FSECNKCDDK…WLLRNMTLGT (529 aa). N-linked (GlcNAc...) asparagine glycans are attached at residues Asn94 and Asn116. 5 disulfide bridges follow: Cys105/Cys338, Cys329/Cys407, Cys441/Cys458, Cys481/Cys496, and Cys522/Cys539. Residues 114 to 224 form a catalytic subdomain A region; it reads LPNTSVVIVF…LGWLEPLLAR (111 aa). Substrate contacts are provided by Asp155 and Arg185. Mn(2+) contacts are provided by Asp208 and His210. The segment at 284–346 is catalytic subdomain B; that stretch reads PVRTPTMAGG…TCSHVGHVFR (63 aa). Trp315 lines the substrate pocket. His343 serves as a coordination point for Mn(2+). The substrate site is built by Arg346 and Tyr351. One can recognise a Ricin B-type lectin domain in the interval 428–550; the sequence is YSLGEIRNVE…GSRSQQWLLR (123 aa). Asn551 carries N-linked (GlcNAc...) asparagine glycosylation.

It belongs to the glycosyltransferase 2 family. GalNAc-T subfamily. It depends on Mn(2+) as a cofactor.

It localises to the golgi apparatus membrane. It catalyses the reaction L-seryl-[protein] + UDP-N-acetyl-alpha-D-galactosamine = a 3-O-[N-acetyl-alpha-D-galactosaminyl]-L-seryl-[protein] + UDP + H(+). It carries out the reaction L-threonyl-[protein] + UDP-N-acetyl-alpha-D-galactosamine = a 3-O-[N-acetyl-alpha-D-galactosaminyl]-L-threonyl-[protein] + UDP + H(+). Its pathway is protein modification; protein glycosylation. Its function is as follows. Catalyzes the initial reaction in O-linked oligosaccharide biosynthesis, the transfer of an N-acetyl-D-galactosamine (GalNAc) residue from UDP-GalNAc to a serine or threonine residue on the protein receptor. Generates GalNAc-O-Ser/Thr structure also known as Tn antigen, which itself is immunogenic but also serves as a precursor for the synthesis of different mucin-type O-glycan core structures. Contributes to the synthesis of O-linked glycans on mucins and proteoglycans of the central nervous system. Can glycosylate both unmodified peptides and glycopeptides that already contain an O-linked GalNAc sugar. Transfers GalNAc to Thr-/Ser-rich tandem repeats GTTPSPVPTTSTTSAP of MUC5AC. Transfers GalNAc to three consecutive serine/threonine residues on SDC3 forming a triplet-Tn epitope expressed in Purkinje cells of the developing brain. May promote neurogenesis through glycosylation and stabilization of PDPN. This chain is Polypeptide N-acetylgalactosaminyltransferase 13 (Galnt13), found in Rattus norvegicus (Rat).